Consider the following 700-residue polypeptide: Methionine--tRNA ligase (700 aa).

The 'HIGH' region signature appears at 13–23 (PYANGDIHLGH). The Zn(2+) site is built by C144, C147, C157, and C160. A 'KMSKS' region motif is present at residues 341–345 (KMSKS). Residue K344 coordinates ATP. The interval 562–587 (QVGAPTASQDDKAAAKNTSPAAMPSS) is disordered. Over residues 577–587 (KNTSPAAMPSS) the composition is skewed to polar residues. Positions 598–700 (DFAKVEMKVA…DEAVIGDSLA (103 aa)) constitute a tRNA-binding domain.

It belongs to the class-I aminoacyl-tRNA synthetase family. MetG type 1 subfamily. In terms of assembly, homodimer. Requires Zn(2+) as cofactor.

The protein localises to the cytoplasm. It catalyses the reaction tRNA(Met) + L-methionine + ATP = L-methionyl-tRNA(Met) + AMP + diphosphate. Functionally, is required not only for elongation of protein synthesis but also for the initiation of all mRNA translation through initiator tRNA(fMet) aminoacylation. This Psychrobacter cryohalolentis (strain ATCC BAA-1226 / DSM 17306 / VKM B-2378 / K5) protein is Methionine--tRNA ligase.